A 369-amino-acid polypeptide reads, in one-letter code: Deoxyhypusine synthase (369 aa).

Residues 105–109 (SNLIS), 131–133 (TAG), Glu-137, and Asp-238 contribute to the NAD(+) site. A spermidine-binding site is contributed by 136–137 (EE). Asp-243 lines the spermidine pocket. Residue Gly-283 participates in NAD(+) binding. His-288 is a binding site for spermidine. Residue 308-309 (TA) participates in NAD(+) binding. Spermidine contacts are provided by residues 314–316 (GSD) and 323–329 (EAVSWGK). Lys-329 functions as the Nucleophile in the catalytic mechanism. 342 to 343 (DA) is an NAD(+) binding site.

The protein belongs to the deoxyhypusine synthase family. Requires NAD(+) as cofactor.

It carries out the reaction [eIF5A protein]-L-lysine + spermidine = [eIF5A protein]-deoxyhypusine + propane-1,3-diamine. It functions in the pathway protein modification; eIF5A hypusination. In terms of biological role, catalyzes the NAD-dependent oxidative cleavage of spermidine and the subsequent transfer of the butylamine moiety of spermidine to the epsilon-amino group of a critical lysine residue of the eIF-5A precursor protein to form the intermediate deoxyhypusine residue. This is the first step of the post-translational modification of that lysine into an unusual amino acid residue named hypusine. Hypusination is unique to mature eIF-5A factor and is essential for its function. The protein is Deoxyhypusine synthase (Dhps) of Rattus norvegicus (Rat).